We begin with the raw amino-acid sequence, 343 residues long: tRNA N6-adenosine threonylcarbamoyltransferase (343 aa).

Residues histidine 108 and histidine 112 each contribute to the Fe cation site. Residues 129-133, aspartate 161, glutamate 178, and serine 258 each bind substrate; that span reads LISGG. Aspartate 286 provides a ligand contact to Fe cation.

This sequence belongs to the KAE1 / TsaD family. Fe(2+) serves as cofactor.

It localises to the cytoplasm. It carries out the reaction L-threonylcarbamoyladenylate + adenosine(37) in tRNA = N(6)-L-threonylcarbamoyladenosine(37) in tRNA + AMP + H(+). Required for the formation of a threonylcarbamoyl group on adenosine at position 37 (t(6)A37) in tRNAs that read codons beginning with adenine. Is probably involved in the transfer of the threonylcarbamoyl moiety of threonylcarbamoyl-AMP (TC-AMP) to the N6 group of A37. The chain is tRNA N6-adenosine threonylcarbamoyltransferase from Pyrobaculum aerophilum (strain ATCC 51768 / DSM 7523 / JCM 9630 / CIP 104966 / NBRC 100827 / IM2).